Here is a 132-residue protein sequence, read N- to C-terminus: Transcription antitermination protein NusB (132 aa).

It belongs to the NusB family.

In terms of biological role, involved in transcription antitermination. Required for transcription of ribosomal RNA (rRNA) genes. Binds specifically to the boxA antiterminator sequence of the ribosomal RNA (rrn) operons. This Campylobacter jejuni subsp. jejuni serotype O:2 (strain ATCC 700819 / NCTC 11168) protein is Transcription antitermination protein NusB.